The sequence spans 205 residues: NMLAHLEDGALNGDTLTPDRKHLLEAQRNRAHSPEMPMHLGPQFVYQWQSNQNAAMSAMPNLQSRLSSLSHISLNLDHPEGRSGSASGSAANLAGSNTHASSVREYRCEYCGKQFGMSWNLKTHLRVHTGEKPFACRLCVAMFKQKAHLLKHLCSVHRNVITTTNGADTENRYSCCFCSMCFESVQELVRHLSGHHNNLLLTKNL.

C2H2-type zinc fingers lie at residues 106–128 (YRCEYCGKQFGMSWNLKTHLRVH), 134–157 (FACRLCVAMFKQKAHLLKHLCSVH), and 173–196 (YSCCFCSMCFESVQELVRHLSGHH).

The protein localises to the nucleus. Functionally, probable transcription factor, which is required for terminalia development. This Drosophila yakuba (Fruit fly) protein is Probable transcription factor Ken (ken).